We begin with the raw amino-acid sequence, 22 residues long: NADH dehydrogenase [ubiquinone] 1 alpha subcomplex subunit 9 (22 aa).

The interval 1–22 (ASNLATGGAGPLIXKGTGGRSS) is disordered.

It belongs to the complex I NDUFA9 subunit family. As to quaternary structure, complex I is composed of about 45 different subunits. It depends on FAD as a cofactor.

Its subcellular location is the mitochondrion matrix. Functionally, accessory subunit of the mitochondrial membrane respiratory chain NADH dehydrogenase (Complex I), that is believed not to be involved in catalysis. Complex I functions in the transfer of electrons from NADH to the respiratory chain. The immediate electron acceptor for the enzyme is believed to be ubiquinone. In Solanum tuberosum (Potato), this protein is NADH dehydrogenase [ubiquinone] 1 alpha subcomplex subunit 9.